The primary structure comprises 220 residues: Large ribosomal subunit protein uL3 (220 aa).

The tract at residues 127–155 is disordered; that stretch reads FQGAIKRHGQSRGPMSHSSHFHRAPDSVG.

Belongs to the universal ribosomal protein uL3 family. Part of the 50S ribosomal subunit. Forms a cluster with proteins L14 and L19.

Functionally, one of the primary rRNA binding proteins, it binds directly near the 3'-end of the 23S rRNA, where it nucleates assembly of the 50S subunit. In Staphylococcus aureus (strain JH9), this protein is Large ribosomal subunit protein uL3.